The following is a 65-amino-acid chain: Conotoxin VnMLCL-031 (65 aa).

A signal peptide spans 1-19 (MLCLPXFIILLLLASPAAP). A propeptide spanning residues 20–43 (NPLQTRXQSNLIRAGPEDANIKTX) is cleaved from the precursor. An Isoleucine amide modification is found at isoleucine 64.

This sequence belongs to the conotoxin T superfamily. Expressed by the venom duct.

The protein resides in the secreted. The sequence is that of Conotoxin VnMLCL-031 from Conus ventricosus (Mediterranean cone).